The primary structure comprises 309 residues: L-aminoadipate-semialdehyde dehydrogenase-phosphopantetheinyl transferase (309 aa).

CoA is bound by residues Arg-47, 86–91, and 108–111; these read RTAKGK and NISH. Mg(2+)-binding residues include Asp-129 and Glu-181. Residue 181–185 participates in CoA binding; that stretch reads ESFIK. Residue Ser-258 is modified to Phosphoserine.

The protein belongs to the P-Pant transferase superfamily. AcpS family. In terms of assembly, monomer. It depends on Mg(2+) as a cofactor.

The protein resides in the cytoplasm. It is found in the cytosol. It carries out the reaction apo-[ACP] + CoA = holo-[ACP] + adenosine 3',5'-bisphosphate + H(+). The catalysed reaction is apo-[ACP] + acetyl-CoA = acetyl-[ACP] + adenosine 3',5'-bisphosphate + H(+). Functionally, catalyzes the post-translational modification of target proteins by phosphopantetheine. Can transfer the 4'-phosphopantetheine moiety from coenzyme A, regardless of whether the CoA is presented in the free thiol form or as an acetyl thioester, to a serine residue of a broad range of acceptors including the acyl carrier domain of FASN. This chain is L-aminoadipate-semialdehyde dehydrogenase-phosphopantetheinyl transferase (AASDHPPT), found in Pongo abelii (Sumatran orangutan).